A 217-amino-acid chain; its full sequence is Polyadenylate-binding protein 3 (217 aa).

The segment at 1 to 28 is disordered; it reads MEEEEHEVYGGEIPEVGDTDVPDPDIDM. Over residues 15 to 28 the composition is skewed to acidic residues; sequence EVGDTDVPDPDIDM. Positions 30–71 form a coiled coil; that stretch reads AADEDAVTELAEMKRRLKEMEEEAAALREMQAKVEKEMGATQ. The interval 75–216 is necessary for homooligomerization; the sequence is SMAANQEGKE…FRRPMRYMPY (142 aa). In terms of domain architecture, RRM spans 89–165; the sequence is RSVYVGNVDY…RQLKVSPKRT (77 aa). The Nuclear localization signal signature appears at 162-169; sequence PKRTNVPG.

In terms of assembly, monomer and homooligomer. Binds RNA as a monomer and oligomerizes when bound to poly(A). Forms a complex with cleavage and polyadenylation specificity factor (CPSF) subunits PAPS4, PABN1, PABN2, CSTF50 and FIPS5. Interacts with CSP3.

Its subcellular location is the nucleus speckle. The protein localises to the cytoplasm. Its function is as follows. Involved in the 3'-end formation of mRNA precursors (pre-mRNA) by the addition of a poly(A) tail of 200-250 nt to the upstream cleavage product. Stimulates poly(A) polymerase (PAPOLA) conferring processivity on the poly(A) tail elongation reaction and also controls the poly(A) tail length. Increases the affinity of poly(A) polymerase for RNA. Binds to poly(A) and to poly(G) with high affinity. May protect the poly(A) tail from degradation. The chain is Polyadenylate-binding protein 3 from Arabidopsis thaliana (Mouse-ear cress).